Reading from the N-terminus, the 313-residue chain is Ribosomal RNA small subunit methyltransferase H (313 aa).

S-adenosyl-L-methionine is bound by residues 35-37 (GGH), aspartate 55, phenylalanine 81, aspartate 103, and glutamine 110.

It belongs to the methyltransferase superfamily. RsmH family.

It is found in the cytoplasm. The catalysed reaction is cytidine(1402) in 16S rRNA + S-adenosyl-L-methionine = N(4)-methylcytidine(1402) in 16S rRNA + S-adenosyl-L-homocysteine + H(+). In terms of biological role, specifically methylates the N4 position of cytidine in position 1402 (C1402) of 16S rRNA. The chain is Ribosomal RNA small subunit methyltransferase H from Azotobacter vinelandii (strain DJ / ATCC BAA-1303).